The primary structure comprises 365 residues: Elongation factor Tu (365 aa).

GTP-binding positions include 1–7, 62–66, and 117–120; these read HVDHGKT, DCPGH, and NKCD. Residues 1–185 enclose the tr-type G domain; it reads HVDHGKTTLT…TLDSYIPTPE (185 aa). Residue threonine 7 participates in Mg(2+) binding.

It belongs to the TRAFAC class translation factor GTPase superfamily. Classic translation factor GTPase family. EF-Tu/EF-1A subfamily. In terms of assembly, monomer.

The protein localises to the cytoplasm. It carries out the reaction GTP + H2O = GDP + phosphate + H(+). Functionally, GTP hydrolase that promotes the GTP-dependent binding of aminoacyl-tRNA to the A-site of ribosomes during protein biosynthesis. This is Elongation factor Tu from Buchnera aphidicola subsp. Schlechtendalia chinensis.